The following is a 31-amino-acid chain: Palustrin-2a (31 aa).

The cysteines at positions 23 and 29 are disulfide-linked.

Expressed by the skin glands.

The protein resides in the secreted. Antimicrobial activity against Gram-negative bacterium E.coli. The protein is Palustrin-2a of Lithobates palustris (Pickerel frog).